Reading from the N-terminus, the 128-residue chain is Small ribosomal subunit protein uS9 (128 aa).

Belongs to the universal ribosomal protein uS9 family.

The sequence is that of Small ribosomal subunit protein uS9 from Amoebophilus asiaticus (strain 5a2).